We begin with the raw amino-acid sequence, 90 residues long: Co-chaperonin GroES (90 aa).

The protein belongs to the GroES chaperonin family. As to quaternary structure, heptamer of 7 subunits arranged in a ring. Interacts with the chaperonin GroEL.

It localises to the cytoplasm. Functionally, together with the chaperonin GroEL, plays an essential role in assisting protein folding. The GroEL-GroES system forms a nano-cage that allows encapsulation of the non-native substrate proteins and provides a physical environment optimized to promote and accelerate protein folding. GroES binds to the apical surface of the GroEL ring, thereby capping the opening of the GroEL channel. This is Co-chaperonin GroES from Thermosipho melanesiensis (strain DSM 12029 / CIP 104789 / BI429).